A 122-amino-acid polypeptide reads, in one-letter code: uncharacterized protein (122 aa).

The N-terminal stretch at 1-28 is a signal peptide; sequence MVPGPPESVVRFFLWFCFLLPPTRKASC. N49 carries an N-linked (GlcNAc...) asparagine glycan.

The protein resides in the secreted. This is an uncharacterized protein from Homo sapiens (Human).